Reading from the N-terminus, the 217-residue chain is UPF0502 protein PFLU_2135 (217 aa).

The protein belongs to the UPF0502 family.

The chain is UPF0502 protein PFLU_2135 from Pseudomonas fluorescens (strain SBW25).